The chain runs to 308 residues: Acyl transferase (308 aa).

Catalysis depends on charge relay system residues Ser116, Asp213, and His243.

The protein belongs to the LuxD family.

It functions in the pathway lipid metabolism; fatty acid reduction for biolumincescence. In terms of biological role, acyl transferase is part of the fatty acid reductase system required for aldehyde biosynthesis; it produces fatty acids for the luminescent reaction. The chain is Acyl transferase from Shewanella hanedai (Alteromonas hanedai).